Here is a 113-residue protein sequence, read N- to C-terminus: Putative pterin-4-alpha-carbinolamine dehydratase (113 aa).

This sequence belongs to the pterin-4-alpha-carbinolamine dehydratase family.

The enzyme catalyses (4aS,6R)-4a-hydroxy-L-erythro-5,6,7,8-tetrahydrobiopterin = (6R)-L-erythro-6,7-dihydrobiopterin + H2O. The sequence is that of Putative pterin-4-alpha-carbinolamine dehydratase from Pelodictyon phaeoclathratiforme (strain DSM 5477 / BU-1).